A 352-amino-acid chain; its full sequence is Biotin synthase (352 aa).

Residues 44-262 (NRVQVSTLLS…LAVARILMPK (219 aa)) enclose the Radical SAM core domain. The [4Fe-4S] cluster site is built by cysteine 59, cysteine 63, and cysteine 66. [2Fe-2S] cluster-binding residues include cysteine 103, cysteine 134, cysteine 194, and arginine 266.

This sequence belongs to the radical SAM superfamily. Biotin synthase family. In terms of assembly, homodimer. It depends on [4Fe-4S] cluster as a cofactor. [2Fe-2S] cluster serves as cofactor.

The catalysed reaction is (4R,5S)-dethiobiotin + (sulfur carrier)-SH + 2 reduced [2Fe-2S]-[ferredoxin] + 2 S-adenosyl-L-methionine = (sulfur carrier)-H + biotin + 2 5'-deoxyadenosine + 2 L-methionine + 2 oxidized [2Fe-2S]-[ferredoxin]. It functions in the pathway cofactor biosynthesis; biotin biosynthesis; biotin from 7,8-diaminononanoate: step 2/2. Catalyzes the conversion of dethiobiotin (DTB) to biotin by the insertion of a sulfur atom into dethiobiotin via a radical-based mechanism. The polypeptide is Biotin synthase (Pseudomonas putida (strain GB-1)).